The following is a 196-amino-acid chain: Pyridoxal 5'-phosphate synthase subunit PdxT (196 aa).

An L-glutamine-binding site is contributed by 47-49 (GES). The active-site Nucleophile is Cys-79. Residues Arg-106 and 134–135 (IR) contribute to the L-glutamine site. Active-site charge relay system residues include His-170 and Glu-172.

It belongs to the glutaminase PdxT/SNO family. In the presence of PdxS, forms a dodecamer of heterodimers. Only shows activity in the heterodimer.

The enzyme catalyses aldehydo-D-ribose 5-phosphate + D-glyceraldehyde 3-phosphate + L-glutamine = pyridoxal 5'-phosphate + L-glutamate + phosphate + 3 H2O + H(+). It carries out the reaction L-glutamine + H2O = L-glutamate + NH4(+). The protein operates within cofactor biosynthesis; pyridoxal 5'-phosphate biosynthesis. Its function is as follows. Catalyzes the hydrolysis of glutamine to glutamate and ammonia as part of the biosynthesis of pyridoxal 5'-phosphate. The resulting ammonia molecule is channeled to the active site of PdxS. The chain is Pyridoxal 5'-phosphate synthase subunit PdxT from Bacillus cereus (strain ZK / E33L).